Here is a 232-residue protein sequence, read N- to C-terminus: MSRRGKVYLNARGKVEAGRRYTLSEALALVTDTARAKFDETVEAAVRLGVNPAHADQMVRGSVVLPNGLGKTVRVLVFAKGEKEKEALDAGADYAGSDEFIEKIKSGWLEFDRVIATPDMMGNVGKLGKILGPRGLMPNPKVGTVTFDVATAVKEVKAGKVEFRVEKAGIVHSPVGKVSFGPDRLMENIQALIEMIIKLKPATSKGTYIKGIALSSTMGPGVRVDPLDLRNL.

This sequence belongs to the universal ribosomal protein uL1 family. In terms of assembly, part of the 50S ribosomal subunit.

Its function is as follows. Binds directly to 23S rRNA. The L1 stalk is quite mobile in the ribosome, and is involved in E site tRNA release. In terms of biological role, protein L1 is also a translational repressor protein, it controls the translation of the L11 operon by binding to its mRNA. The protein is Large ribosomal subunit protein uL1 of Syntrophus aciditrophicus (strain SB).